The following is an 808-amino-acid chain: Ribosome biogenesis protein BOP1 homolog (808 aa).

The interval Met1–Thr56 is disordered. 2 stretches are compositionally biased toward low complexity: residues Arg12–Pro24 and Ala33–Asp50. WD repeat units follow at residues Gly430–Arg469, Lys640–Lys680, Ser682–Lys720, Ser724–Lys766, and Lys777–Glu808.

The protein belongs to the WD repeat BOP1/ERB1 family.

It is found in the nucleus. It localises to the nucleolus. The protein resides in the nucleoplasm. Required for maturation of ribosomal RNAs and formation of the large ribosomal subunit. The protein is Ribosome biogenesis protein BOP1 homolog of Leishmania infantum.